A 161-amino-acid chain; its full sequence is MSVKGKVFKYGDNVDTDVIIPARYLNTSDANELAAHCMEDIDVDFVKNVKSGDIIVANKNFGCGSSREHAPLAIKTAGVSCVIASTFARIFYRNAINIGLPILECDEAVKNIDAGDELEVDFSTGLIKNLTKSQEYQGEAFPEFMQKIIDNDGLIGYIRNR.

It belongs to the LeuD family. LeuD type 2 subfamily. As to quaternary structure, heterodimer of LeuC and LeuD.

It catalyses the reaction (2R,3S)-3-isopropylmalate = (2S)-2-isopropylmalate. Its pathway is amino-acid biosynthesis; L-leucine biosynthesis; L-leucine from 3-methyl-2-oxobutanoate: step 2/4. Its function is as follows. Catalyzes the isomerization between 2-isopropylmalate and 3-isopropylmalate, via the formation of 2-isopropylmaleate. The protein is 3-isopropylmalate dehydratase small subunit of Clostridium beijerinckii (strain ATCC 51743 / NCIMB 8052) (Clostridium acetobutylicum).